We begin with the raw amino-acid sequence, 389 residues long: Chitin-binding protein CbpD (389 aa).

Positions 1–25 (MKHYSATLALLPLTLALFLPQAAHA) are cleaved as a signal peptide. Residues 26–208 (HGSMETPPSR…EAFYACIDVS (183 aa)) enclose the Chitin-binding type-4 domain. Tyr37 carries the phosphotyrosine modification. Ser210 is subject to Phosphoserine.

The protein resides in the secreted. Functionally, binds but does not hydrolyze chitin. The polypeptide is Chitin-binding protein CbpD (cpbD) (Pseudomonas aeruginosa (strain UCBPP-PA14)).